A 283-amino-acid chain; its full sequence is tRNA pseudouridine synthase B (283 aa).

The Nucleophile role is filled by Asp38.

This sequence belongs to the pseudouridine synthase TruB family. Type 1 subfamily.

The catalysed reaction is uridine(55) in tRNA = pseudouridine(55) in tRNA. Responsible for synthesis of pseudouridine from uracil-55 in the psi GC loop of transfer RNAs. The chain is tRNA pseudouridine synthase B from Aster yellows witches'-broom phytoplasma (strain AYWB).